Consider the following 242-residue polypeptide: Small ribosomal subunit protein uS3 (242 aa).

The KH type-2 domain maps to 39 to 109 (IRQYVKATLA…QIRINVVEVT (71 aa)). The tract at residues 220-242 (KVNQPKRRQQKRRQQYDDRSNEG) is disordered. Over residues 223 to 232 (QPKRRQQKRR) the composition is skewed to basic residues. Residues 233–242 (QQYDDRSNEG) are compositionally biased toward basic and acidic residues.

It belongs to the universal ribosomal protein uS3 family. In terms of assembly, part of the 30S ribosomal subunit. Forms a tight complex with proteins S10 and S14.

Its function is as follows. Binds the lower part of the 30S subunit head. Binds mRNA in the 70S ribosome, positioning it for translation. This is Small ribosomal subunit protein uS3 from Trichodesmium erythraeum (strain IMS101).